The chain runs to 869 residues: Probable beta-glucosidase F (869 aa).

A signal peptide spans 1-19 (MRVLSAIALVASLASSALS). Asn-77 and Asn-261 each carry an N-linked (GlcNAc...) asparagine glycan. The active site involves Asp-289. Asn-332, Asn-364, Asn-399, and Asn-478 each carry an N-linked (GlcNAc...) asparagine glycan. The segment at 677 to 697 (STYPPTRPPKGPTPTYPTAIP) is disordered. Pro residues predominate over residues 681–691 (PTRPPKGPTPT). Asn-728 carries an N-linked (GlcNAc...) asparagine glycan.

The protein belongs to the glycosyl hydrolase 3 family.

The protein localises to the secreted. It catalyses the reaction Hydrolysis of terminal, non-reducing beta-D-glucosyl residues with release of beta-D-glucose.. It participates in glycan metabolism; cellulose degradation. Its function is as follows. Beta-glucosidases are one of a number of cellulolytic enzymes involved in the degradation of cellulosic biomass. Catalyzes the last step releasing glucose from the inhibitory cellobiose. The sequence is that of Probable beta-glucosidase F (bglF) from Aspergillus fumigatus (strain ATCC MYA-4609 / CBS 101355 / FGSC A1100 / Af293) (Neosartorya fumigata).